The primary structure comprises 354 residues: Uroporphyrinogen decarboxylase (354 aa).

Substrate is bound by residues 27-31 (RQAGR), D77, Y154, T209, and H327.

Belongs to the uroporphyrinogen decarboxylase family. In terms of assembly, homodimer.

The protein resides in the cytoplasm. The catalysed reaction is uroporphyrinogen III + 4 H(+) = coproporphyrinogen III + 4 CO2. Its pathway is porphyrin-containing compound metabolism; protoporphyrin-IX biosynthesis; coproporphyrinogen-III from 5-aminolevulinate: step 4/4. Catalyzes the decarboxylation of four acetate groups of uroporphyrinogen-III to yield coproporphyrinogen-III. In Salmonella arizonae (strain ATCC BAA-731 / CDC346-86 / RSK2980), this protein is Uroporphyrinogen decarboxylase.